We begin with the raw amino-acid sequence, 240 residues long: Aliphatic sulfonates import ATP-binding protein SsuB (240 aa).

The 222-residue stretch at 6–227 (IQLSKLRKNF…VKDRHFACFE (222 aa)) folds into the ABC transporter domain. Residue 38–45 (GESGCGKS) coordinates ATP.

It belongs to the ABC transporter superfamily. Aliphatic sulfonates importer (TC 3.A.1.17.2) family. In terms of assembly, the complex is composed of two ATP-binding proteins (SsuB), two transmembrane proteins (SsuC) and a solute-binding protein (SsuA).

Its subcellular location is the cell inner membrane. It catalyses the reaction ATP + H2O + aliphatic sulfonate-[sulfonate-binding protein]Side 1 = ADP + phosphate + aliphatic sulfonateSide 2 + [sulfonate-binding protein]Side 1.. Part of the ABC transporter complex SsuABC involved in aliphatic sulfonates import. Responsible for energy coupling to the transport system. The sequence is that of Aliphatic sulfonates import ATP-binding protein SsuB from Zymomonas mobilis subsp. mobilis (strain ATCC 31821 / ZM4 / CP4).